The chain runs to 578 residues: Probable cytochrome c oxidase subunit 1-alpha (578 aa).

The segment at 1-21 is disordered; sequence MSILNEPQGASAAEDSYENEL. The helical transmembrane segment at 44-64 threads the bilayer; it reads IGTMYLVTSFAFFVIGGVMAL. A Fe(II)-heme a-binding site is contributed by histidine 90. 6 helical membrane passes run 93–113, 125–145, 174–194, 217–237, 262–282, and 294–314; these read IMLL…IMPL, LNMF…GGFL, LWIM…VNFI, VLLT…ALFA, LFWF…FGIV, and IFGY…SVTV. 2 residues coordinate Cu cation: histidine 268 and tyrosine 272. Residues 268-272 constitute a cross-link (1'-histidyl-3'-tyrosine (His-Tyr)); the sequence is HPEVY. Cu cation-binding residues include histidine 317 and histidine 318. Helical transmembrane passes span 319–339 and 363–383; these read MYVT…LIAV and MLWS…GVIL. Histidine 401 serves as a coordination point for heme a3. 3 helical membrane-spanning segments follow: residues 402–422, 437–457, and 480–500; these read FHYV…HFWW, ITFW…HWLG, and ISTI…YNIW. Histidine 403 contributes to the Fe(II)-heme a binding site.

The protein belongs to the heme-copper respiratory oxidase family. Associates with subunits II, III and IV to form cytochrome c oxidase. It depends on Cu(2+) as a cofactor. The cofactor is heme.

The protein localises to the cell membrane. It catalyses the reaction 4 Fe(II)-[cytochrome c] + O2 + 8 H(+)(in) = 4 Fe(III)-[cytochrome c] + 2 H2O + 4 H(+)(out). Its pathway is energy metabolism; oxidative phosphorylation. Functionally, cytochrome c oxidase is the component of the respiratory chain that catalyzes the reduction of oxygen to water. Subunits 1-3 form the functional core of the enzyme complex. CO I is the catalytic subunit of the enzyme. Electrons originating in cytochrome c are transferred via the copper A center of subunit 2 and heme A of subunit 1 to the bimetallic center formed by heme A3 and copper B. This is Probable cytochrome c oxidase subunit 1-alpha (ctaD1) from Streptomyces coelicolor (strain ATCC BAA-471 / A3(2) / M145).